The following is a 356-amino-acid chain: Peptide chain release factor 1 (356 aa).

Residue Q232 is modified to N5-methylglutamine. The disordered stretch occupies residues 281–301 (ERQSSELSADRKAQVGSGDRS).

Belongs to the prokaryotic/mitochondrial release factor family. Post-translationally, methylated by PrmC. Methylation increases the termination efficiency of RF1.

The protein localises to the cytoplasm. In terms of biological role, peptide chain release factor 1 directs the termination of translation in response to the peptide chain termination codons UAG and UAA. This Desulfovibrio desulfuricans (strain ATCC 27774 / DSM 6949 / MB) protein is Peptide chain release factor 1.